Reading from the N-terminus, the 134-residue chain is Large ribosomal subunit protein bL20 (134 aa).

The protein belongs to the bacterial ribosomal protein bL20 family.

Binds directly to 23S ribosomal RNA and is necessary for the in vitro assembly process of the 50S ribosomal subunit. It is not involved in the protein synthesizing functions of that subunit. The chain is Large ribosomal subunit protein bL20 from Brucella abortus (strain S19).